The sequence spans 94 residues: MFTINAEVRKEQGKGASRRLRAANKFPAIIYGGSEAPIAIELDHDKVMNMQAKAEFYSEVLTLVVDGKEVKVKAQAVQRHAFKPKLTHIDFIRA.

It belongs to the bacterial ribosomal protein bL25 family. In terms of assembly, part of the 50S ribosomal subunit; part of the 5S rRNA/L5/L18/L25 subcomplex. Contacts the 5S rRNA. Binds to the 5S rRNA independently of L5 and L18.

In terms of biological role, this is one of the proteins that binds to the 5S RNA in the ribosome where it forms part of the central protuberance. In Salmonella arizonae (strain ATCC BAA-731 / CDC346-86 / RSK2980), this protein is Large ribosomal subunit protein bL25.